We begin with the raw amino-acid sequence, 1189 residues long: Pumilio homolog 1 (1189 aa).

5 disordered regions span residues 24–65, 233–288, 491–525, 614–652, and 743–774; these read QHAQ…SSPV, SCLR…QNGI, QQTT…GQQT, AGTT…NNSL, and GPVG…SSLN. The span at 45 to 58 shows a compositional bias: low complexity; the sequence is QAQPQPAANQALAA. Basic and acidic residues predominate over residues 250-277; sequence NDKGDKKNKGTFDGDKLGDLKEEGDVMD. Low complexity predominate over residues 491–503; it reads QQTTQQTQQGQQQ. A compositionally biased stretch (polar residues) spans 512-525; sequence RPLTPNQNQQGQQT. Low complexity-rich tracts occupy residues 627–652 and 764–774; these read QQPQ…NNSL and LSSHGSSSSLN. In terms of domain architecture, PUM-HD spans 829 to 1171; sequence GRSRLLEDFR…HILAKLEKYY (343 aa). Pumilio repeat units follow at residues 849–884, 885–920, 921–958, 959–994, 995–1030, 1031–1066, 1067–1102, and 1106–1145; these read EIAG…LVFN, EILQ…ALAE, RIRG…EMVR, ELDG…FIID, AFKG…PILE, ELHQ…KIVA, EIRG…MLID, and TMND…IVMH. The tract at residues 864–868 is adenine-nucleotide binding in RNA target; sequence SRFIQ. The uracil-nucleotide binding in RNA target stretch occupies residues 900-904; the sequence is NYVIQ. Residues 936–940 form an adenine-nucleotide binding in RNA target region; sequence CRVIQ. Residues 974–978 form a non-specific-nucleotide binding in RNA target region; the sequence is NHVVQ. Residues 1010-1014 form an adenine-nucleotide binding in RNA target region; it reads CRVIQ. The interval 1046 to 1050 is uracil-nucleotide binding in RNA target; sequence NYVIQ. 2 guanine-nucleotide binding in RNA target regions span residues 1082-1086 and 1083-1086; these read SNVVE and NVVE. The segment at 1125 to 1129 is uracil-nucleotide binding in RNA target; that stretch reads NYVVQ.

As to expression, detected in embryonic male and female gonads, heart, liver and muscle. Detected in adult brain, testis, ovary, heart, lung, spleen, kidney and muscle.

The protein localises to the cytoplasm. Its subcellular location is the P-body. The protein resides in the cytoplasmic granule. Its function is as follows. Sequence-specific RNA-binding protein that acts as a post-transcriptional repressor by binding the 3'-UTR of mRNA targets. Binds to an RNA consensus sequence, the Pumilio Response Element (PRE), 5'-UGUANAUA-3', that is related to the Nanos Response Element (NRE). Mediates post-transcriptional repression of transcripts via different mechanisms: acts via direct recruitment of the CCR4-POP2-NOT deadenylase leading to translational inhibition and mRNA degradation. Also mediates deadenylation-independent repression by promoting accessibility of miRNAs. The sequence is that of Pumilio homolog 1 (PUM1) from Gallus gallus (Chicken).